Here is a 393-residue protein sequence, read N- to C-terminus: Formate-dependent phosphoribosylglycinamide formyltransferase (393 aa).

Residues E22 to L23 and E82 each bind N(1)-(5-phospho-beta-D-ribosyl)glycinamide. Residues R114, K155, S160–Q165, E195–I198, and E203 contribute to the ATP site. One can recognise an ATP-grasp domain in the interval R119–L308. Residues E267 and E279 each contribute to the Mg(2+) site. N(1)-(5-phospho-beta-D-ribosyl)glycinamide is bound by residues D286, K356, and R363–R364.

It belongs to the PurK/PurT family. In terms of assembly, homodimer.

The catalysed reaction is N(1)-(5-phospho-beta-D-ribosyl)glycinamide + formate + ATP = N(2)-formyl-N(1)-(5-phospho-beta-D-ribosyl)glycinamide + ADP + phosphate + H(+). It functions in the pathway purine metabolism; IMP biosynthesis via de novo pathway; N(2)-formyl-N(1)-(5-phospho-D-ribosyl)glycinamide from N(1)-(5-phospho-D-ribosyl)glycinamide (formate route): step 1/1. Functionally, involved in the de novo purine biosynthesis. Catalyzes the transfer of formate to 5-phospho-ribosyl-glycinamide (GAR), producing 5-phospho-ribosyl-N-formylglycinamide (FGAR). Formate is provided by PurU via hydrolysis of 10-formyl-tetrahydrofolate. In Pseudomonas fluorescens (strain Pf0-1), this protein is Formate-dependent phosphoribosylglycinamide formyltransferase.